The primary structure comprises 533 residues: tRNA(Ile)-lysidine synthase (533 aa).

Residue 27 to 32 (SGGSDS) participates in ATP binding.

Belongs to the tRNA(Ile)-lysidine synthase family.

Its subcellular location is the cytoplasm. The catalysed reaction is cytidine(34) in tRNA(Ile2) + L-lysine + ATP = lysidine(34) in tRNA(Ile2) + AMP + diphosphate + H(+). Ligates lysine onto the cytidine present at position 34 of the AUA codon-specific tRNA(Ile) that contains the anticodon CAU, in an ATP-dependent manner. Cytidine is converted to lysidine, thus changing the amino acid specificity of the tRNA from methionine to isoleucine. This Rickettsia peacockii (strain Rustic) protein is tRNA(Ile)-lysidine synthase.